We begin with the raw amino-acid sequence, 675 residues long: Dihydrolipoyllysine-residue acetyltransferase component of pyruvate dehydrogenase complex (675 aa).

The 76-residue stretch at 2-77 (AFSVEMPELG…DVGGVIAIIG (76 aa)) folds into the Lipoyl-binding 1 domain. N6-lipoyllysine is present on lysine 43. Residues 77-124 (GDADETPANEAPADEAPAPAEEEEPVKEEPKKEAAPEAPAATGAATDV) are disordered. Low complexity-rich tracts occupy residues 84–95 (ANEAPADEAPAP) and 112–124 (PEAP…ATDV). The Lipoyl-binding 2 domain maps to 121–196 (ATDVEMPELG…DVGAVIARIG (76 aa)). At lysine 162 the chain carries N6-lipoyllysine. Positions 200-240 (AAAAPAEEEAAPAEEEEPVKEEPKKEAAPEAPAATGAATDV) are disordered. Positions 205–218 (AEEEAAPAEEEEPV) are enriched in acidic residues. In terms of domain architecture, Lipoyl-binding 3 spans 237–312 (ATDVEMPELG…DVGAVIARIG (76 aa)). Lysine 278 is modified (N6-lipoyllysine). Residues 316-368 (AAAAPAEEEAAPAEEEEPVKEEPKKEEPKKEEPKKEAATTPAAASATVSASGD) are disordered. Positions 321–334 (AEEEAAPAEEEEPV) are enriched in acidic residues. Residues 335–352 (KEEPKKEEPKKEEPKKEA) show a composition bias toward basic and acidic residues. The segment covering 353-366 (ATTPAAASATVSAS) has biased composition (low complexity). The Peripheral subunit-binding (PSBD) domain maps to 372 to 409 (YVTPLVRKLAEKHGVDLNTVTGTGIGGRIRKQDVLAAA). Catalysis depends on residues histidine 645 and aspartate 649.

The protein belongs to the 2-oxoacid dehydrogenase family. Forms a 24-polypeptide structural core with octahedral symmetry. Part of an unusual ODH/PDH supercomplex, consisting of AceE (E1), AceF (E2), and Lpd (E3) together with OdhA (E1+E2). (R)-lipoate is required as a cofactor.

It catalyses the reaction N(6)-[(R)-dihydrolipoyl]-L-lysyl-[protein] + acetyl-CoA = N(6)-[(R)-S(8)-acetyldihydrolipoyl]-L-lysyl-[protein] + CoA. Functionally, is essential for both 2-oxoglutarate dehydrogenase (ODH) and pyruvate dehydrogenase (PDH) activities, but AceF has exclusively transacetylase (and no transsuccinylase) activity. The lipoyl residues required for ODH activity are likely provided by AceF. The chain is Dihydrolipoyllysine-residue acetyltransferase component of pyruvate dehydrogenase complex (aceF) from Corynebacterium glutamicum (strain ATCC 13032 / DSM 20300 / JCM 1318 / BCRC 11384 / CCUG 27702 / LMG 3730 / NBRC 12168 / NCIMB 10025 / NRRL B-2784 / 534).